Consider the following 600-residue polypeptide: UvrABC system protein C (600 aa).

A GIY-YIG domain is found at 15–92 (EKPGCYLMKD…IKKYQPYYNV (78 aa)). The region spanning 197–232 (GAVKQDLTQKMEQASEQLEFERAAEIRDQLKYIEET) is the UVR domain.

It belongs to the UvrC family. In terms of assembly, interacts with UvrB in an incision complex.

It localises to the cytoplasm. Its function is as follows. The UvrABC repair system catalyzes the recognition and processing of DNA lesions. UvrC both incises the 5' and 3' sides of the lesion. The N-terminal half is responsible for the 3' incision and the C-terminal half is responsible for the 5' incision. In Lactobacillus helveticus (strain DPC 4571), this protein is UvrABC system protein C.